The chain runs to 278 residues: Ankyrin repeat and SOCS box protein 13 (278 aa).

6 ANK repeats span residues 18–47 (VERT…CVNQ), 51–80 (DSIT…QVDA), 84–113 (DGST…KVNP), 116–145 (YTAS…NLEA), 149–178 (HFGT…NVNA), and 181–210 (LHET…NIYA). Residues 229-278 (AKCFEYYEKTPLTLSQLCRVNLRKATGVRGLEKIAKLNIPPRLIDYLSYN) form the SOCS box domain.

This sequence belongs to the ankyrin SOCS box (ASB) family.

The protein operates within protein modification; protein ubiquitination. May be a substrate-recognition component of a SCF-like ECS (Elongin-Cullin-SOCS-box protein) E3 ubiquitin-protein ligase complex which mediates the ubiquitination and subsequent proteasomal degradation of target proteins. The sequence is that of Ankyrin repeat and SOCS box protein 13 (ASB13) from Homo sapiens (Human).